The following is a 272-amino-acid chain: HTH-type transcriptional repressor AllR (272 aa).

The disordered stretch occupies residues 1–20 (MTEVRRRGRPGQAEPTAQKG). The HTH iclR-type domain maps to 21 to 83 (AQALERGIAI…SQLGWWHIGL (63 aa)). A DNA-binding region (H-T-H motif) is located at residues 43-62 (VSDISGSLDLPLSTTFRLLK). One can recognise an IclR-ED domain in the interval 98-267 (VLSVAGPFMH…AKDISTALGL (170 aa)). Glyoxylate is bound by residues 154-156 (SGA), D207, C217, and 234-236 (SIS).

Its function is as follows. Negative regulator of allantoin and glyoxylate utilization operons. Binds to the gcl promoter and to the allS-allA intergenic region. This chain is HTH-type transcriptional repressor AllR (allR), found in Salmonella typhi.